A 379-amino-acid chain; its full sequence is Lipid-A-disaccharide synthase (379 aa).

Belongs to the LpxB family.

It carries out the reaction a lipid X + a UDP-2-N,3-O-bis[(3R)-3-hydroxyacyl]-alpha-D-glucosamine = a lipid A disaccharide + UDP + H(+). It functions in the pathway bacterial outer membrane biogenesis; LPS lipid A biosynthesis. Condensation of UDP-2,3-diacylglucosamine and 2,3-diacylglucosamine-1-phosphate to form lipid A disaccharide, a precursor of lipid A, a phosphorylated glycolipid that anchors the lipopolysaccharide to the outer membrane of the cell. This Aeromonas hydrophila subsp. hydrophila (strain ATCC 7966 / DSM 30187 / BCRC 13018 / CCUG 14551 / JCM 1027 / KCTC 2358 / NCIMB 9240 / NCTC 8049) protein is Lipid-A-disaccharide synthase.